A 535-amino-acid chain; its full sequence is tRNA-2-methylthio-N(6)-dimethylallyladenosine synthase (535 aa).

An MTTase N-terminal domain is found at 24 to 139; it reads RTYEVRTFGC…LPRLLERARH (116 aa). [4Fe-4S] cluster-binding residues include C33, C68, C102, C176, C180, and C183. One can recognise a Radical SAM core domain in the interval 162 to 392; that stretch reads RDSSFSGWVS…IALQERISLE (231 aa). One can recognise a TRAM domain in the interval 395–465; it reads EKLIGRDVEL…PHYLIADAAG (71 aa). The disordered stretch occupies residues 512–535; sequence RTREPLTSPGVGTMPLYDPTDGQR.

This sequence belongs to the methylthiotransferase family. MiaB subfamily. In terms of assembly, monomer. [4Fe-4S] cluster serves as cofactor.

It localises to the cytoplasm. It carries out the reaction N(6)-dimethylallyladenosine(37) in tRNA + (sulfur carrier)-SH + AH2 + 2 S-adenosyl-L-methionine = 2-methylsulfanyl-N(6)-dimethylallyladenosine(37) in tRNA + (sulfur carrier)-H + 5'-deoxyadenosine + L-methionine + A + S-adenosyl-L-homocysteine + 2 H(+). In terms of biological role, catalyzes the methylthiolation of N6-(dimethylallyl)adenosine (i(6)A), leading to the formation of 2-methylthio-N6-(dimethylallyl)adenosine (ms(2)i(6)A) at position 37 in tRNAs that read codons beginning with uridine. This Leifsonia xyli subsp. xyli (strain CTCB07) protein is tRNA-2-methylthio-N(6)-dimethylallyladenosine synthase.